A 359-amino-acid polypeptide reads, in one-letter code: Biotin synthase (359 aa).

The disordered stretch occupies residues 1-23; it reads MSVADSSAADSVAAPDTADTSSS. Residues 76–302 enclose the Radical SAM core domain; it reads YFGNTVQLYF…VNPDRELRIA (227 aa). [4Fe-4S] cluster is bound by residues Cys-94, Cys-98, and Cys-101. 4 residues coordinate [2Fe-2S] cluster: Cys-138, Cys-170, Cys-230, and Arg-300.

This sequence belongs to the radical SAM superfamily. Biotin synthase family. In terms of assembly, homodimer. [4Fe-4S] cluster serves as cofactor. [2Fe-2S] cluster is required as a cofactor.

It carries out the reaction (4R,5S)-dethiobiotin + (sulfur carrier)-SH + 2 reduced [2Fe-2S]-[ferredoxin] + 2 S-adenosyl-L-methionine = (sulfur carrier)-H + biotin + 2 5'-deoxyadenosine + 2 L-methionine + 2 oxidized [2Fe-2S]-[ferredoxin]. The protein operates within cofactor biosynthesis; biotin biosynthesis; biotin from 7,8-diaminononanoate: step 2/2. Catalyzes the conversion of dethiobiotin (DTB) to biotin by the insertion of a sulfur atom into dethiobiotin via a radical-based mechanism. The polypeptide is Biotin synthase (Rhodopirellula baltica (strain DSM 10527 / NCIMB 13988 / SH1)).